Consider the following 389-residue polypeptide: Arrestin-C (389 aa).

The protein belongs to the arrestin family. In terms of tissue distribution, retina and pineal gland.

Its function is as follows. May play a role in an as yet undefined retina-specific signal transduction. Could bind to photoactivated-phosphorylated red/green opsins. The sequence is that of Arrestin-C (arr3) from Lithobates pipiens (Northern leopard frog).